The following is a 1013-amino-acid chain: MGLQALSPRMLLWLVVSGIVFSRVLWVCAGLDYDYTFDGNEEDKTEPIDYKDPCKAAVFWGDIALDDEDLNIFQIDRTIDLTQSPFGKLGHITGGFGDHGMPKKRGALYQLIERIRRIGSGLEQNNTMKGKAPPKLSEQSEKNRVPRAATSRTERIWPGGVIPYVIGGNFTGSQRAMFKQAMRHWEKHTCVTFTERSDEESYIVFTYRPCGCCSYVGRRGNGPQAISIGKNCDKFGIVVHELGHVIGFWHEHTRPDRDNHVTIIRENIQPGQEYNFLKMEPGEVNSLGERYDFDSIMHYARNTFSRGMFLDTILPSRDDNGIRPAIGQRTRLSKGDIAQARKLYRCPACGETLQESSGNLSSPGFPNGYPSYTHCIWRVSVTPGEKIVLNFTTMDLYKSSLCWYDYIEVRDGYWRKSPLLGRFCGDKVAGVLTSTDSRMWIEFRSSSNWVGKGFAAVYEAICGGEIRKNEGQIQSPNYPDDYRPMKECVWKIMVSEGYHVGLTFQAFEIERHDSCAYDHLEVRDGASENSPLIGRFCGYDKPEDIRSTSNTLWMKFVSDGTVNKAGFAANFFKEEDECAKPDRGGCEQRCLNTLGSYQCACEPGYELGPDRRSCEAACGGLLTKLNGTITTPGWPKEYPPNKNCVWQVIAPSQYRISVKFEFFELEGNEVCKYDYVEIWSGPSSESKLHGKFCGADIPEVMTSHFNNMRIEFKSDNTVSKKGFKAHFFSDKDECSKDNGGCQHECVNTMGSYTCQCRNGFVLHENKHDCKEAECEQKIHSPSGLITSPNWPDKYPSRKECTWVISAIPGHRITLAFNEFEVEQHQECAYDHLEIFDGETEKSPILGRLCGSKIPDPLMATGNEMFIRFISDASVQRKGFQATHSTECGGRLKAESKPRDLYSHAQFGDNNYPGQLDCEWLLVSERGSRLELSFQTFEVEEEADCGYDYVEVFDGLSSKAVGLGRFCGSGPPEEIYSIGDVALIHFHTDDTINKKGFYIRYKSIRYPETMHAKN.

The signal sequence occupies residues 1–30; that stretch reads MGLQALSPRMLLWLVVSGIVFSRVLWVCAG. A propeptide spanning residues 31–147 is cleaved from the precursor; it reads LDYDYTFDGN…EQSEKNRVPR (117 aa). The segment at 124–150 is disordered; the sequence is QNNTMKGKAPPKLSEQSEKNRVPRAAT. The Peptidase M12A domain occupies 148–347; the sequence is AATSRTERIW…AQARKLYRCP (200 aa). A glycan (N-linked (GlcNAc...) asparagine) is linked at Asn169. 4 disulfide bridges follow: Cys190-Cys346, Cys210-Cys232, Cys212-Cys213, and Cys349-Cys375. His240 provides a ligand contact to Zn(2+). Glu241 is an active-site residue. 2 residues coordinate Zn(2+): His244 and His250. CUB domains lie at 349–461 and 462–574; these read CGET…YEAI and CGGE…FFKE. N-linked (GlcNAc...) asparagine glycosylation is found at Asn359 and Asn390. 15 disulfide bridges follow: Cys402–Cys424, Cys462–Cys488, Cys515–Cys537, Cys578–Cys590, Cys586–Cys599, Cys601–Cys614, Cys618–Cys644, Cys671–Cys693, Cys734–Cys745, Cys741–Cys754, Cys756–Cys769, Cys774–Cys800, Cys827–Cys849, Cys887–Cys917, and Cys944–Cys966. Residues 574–615 form the EGF-like 1; calcium-binding domain; sequence EEDECAKPDRGGCEQRCLNTLGSYQCACEPGYELGPDRRSCE. The CUB 3 domain occupies 618 to 730; sequence CGGLLTKLNG…KGFKAHFFSD (113 aa). An N-linked (GlcNAc...) asparagine glycan is attached at Asn626. The EGF-like 2; calcium-binding domain occupies 730 to 770; the sequence is DKDECSKDNGGCQHECVNTMGSYTCQCRNGFVLHENKHDCK. 2 consecutive CUB domains span residues 774-886 and 887-1003; these read CEQK…HSTE and CGGR…YKSI.

Requires Zn(2+) as cofactor. As to expression, highly expressed in brain and kidney and weakly in lung, skeletal muscle. A perceptible level of expression is observed in heart and testis.

It localises to the secreted. Its function is as follows. Protease which processes procollagen C-propeptides, such as chordin, pro-biglycan and pro-lysyl oxidase. Required for the embryonic development, especially heart development. Predominant protease, which in the development, influences dorsal-ventral patterning and skeletogenesis. The protein is Tolloid-like protein 1 (Tll1) of Mus musculus (Mouse).